Consider the following 177-residue polypeptide: Large ribosomal subunit protein uL10 (177 aa).

This sequence belongs to the universal ribosomal protein uL10 family. Part of the ribosomal stalk of the 50S ribosomal subunit. The N-terminus interacts with L11 and the large rRNA to form the base of the stalk. The C-terminus forms an elongated spine to which L12 dimers bind in a sequential fashion forming a multimeric L10(L12)X complex.

Forms part of the ribosomal stalk, playing a central role in the interaction of the ribosome with GTP-bound translation factors. The sequence is that of Large ribosomal subunit protein uL10 from Mycobacterium leprae (strain Br4923).